Consider the following 374-residue polypeptide: Peptide chain release factor 2 (374 aa).

The residue at position 249 (glutamine 249) is an N5-methylglutamine.

Belongs to the prokaryotic/mitochondrial release factor family. Post-translationally, methylated by PrmC. Methylation increases the termination efficiency of RF2.

It is found in the cytoplasm. Functionally, peptide chain release factor 2 directs the termination of translation in response to the peptide chain termination codons UGA and UAA. This chain is Peptide chain release factor 2, found in Ruegeria sp. (strain TM1040) (Silicibacter sp.).